Here is a 498-residue protein sequence, read N- to C-terminus: Minor fimbrium subunit Mfa1 (498 aa).

Residues 1-19 (MKLNKMFLVGALLSLGFAS) form the signal peptide. A lipid anchor (N-palmitoyl cysteine) is attached at Cys20. A lipid anchor (S-diacylglycerol cysteine) is attached at Cys20. Positions 20–50 (CSKEGNGPAPDSSSTADTHMSVSMSLPQHNR) are excised as a propeptide. Residues 436-476 (SGNPFVPTDPDPNNPDTPDNPDTPDPEDPDTPNPEEPLPVQ) form a disordered region.

This sequence belongs to the bacteroidetes fimbrillin superfamily. FimA/Mfa1 family. In terms of assembly, structural component of the fimbrial stalk. Minor fimbriae are composed of a structural subunit, most often Mfa1, and the accessory subunits Mfa3, Mfa4 and Mfa5. Mfa1 interacts with Mfa2; this anchors the fimbrium in the membrane. Fimbrium assembly occurs by linear, head-to-tail oligomerization of fimbrial subunits. This is mediated via insertion of a C-terminal beta-strand from one subunit into a groove in the N-terminal domain of the following subunit.

It is found in the fimbrium. It localises to the cell outer membrane. In terms of biological role, structural subunit of the minor fimbriae. These filamentous pili are attached to the cell surface; they mediate biofilm formation, adhesion onto host cells and onto other bacteria that are part of the oral microbiome. They play an important role in invasion of periodontal tissues and are recognized as major virulence factors. Mfa1 orthologs from different strains have highly divergent sequences, and this correlates with pathogenicity. The chain is Minor fimbrium subunit Mfa1 from Porphyromonas gingivalis (Bacteroides gingivalis).